Here is a 204-residue protein sequence, read N- to C-terminus: Acyl-homoserine-lactone synthase (204 aa).

Belongs to the autoinducer synthase family.

The enzyme catalyses a fatty acyl-[ACP] + S-adenosyl-L-methionine = an N-acyl-L-homoserine lactone + S-methyl-5'-thioadenosine + holo-[ACP] + H(+). Its function is as follows. Required for the synthesis of acyl-HSL autoinducers that bind to SolR. The protein is Acyl-homoserine-lactone synthase (solI) of Ralstonia nicotianae (strain ATCC BAA-1114 / GMI1000) (Ralstonia solanacearum).